A 218-amino-acid polypeptide reads, in one-letter code: Histone H1 (218 aa).

Composition is skewed to low complexity over residues 1-19 and 27-39; these read MSETAPVAAPAVSAPGAKA and AAGGSKARKPAGP. Disordered stretches follow at residues 1-41 and 89-218; these read MSET…GPSV and VGKG…PKKK. Ser2 bears the N-acetylserine mark. Residues 37-110 form the H15 domain; that stretch reads AGPSVTELIT…GASGSFKLNK (74 aa). Basic residues-rich tracts occupy residues 119-133, 141-158, 166-184, and 191-218; these read ATKKKPAAKPKKPAA, KKPKKAAAVKKSPKKAKK, KAAKSPKKAAKAGRPKKAA, and KAVKPKAAKPKAAKPKAAKAKKAAPKKK.

It belongs to the histone H1/H5 family.

Its subcellular location is the nucleus. The protein resides in the chromosome. Its function is as follows. Histones H1 are necessary for the condensation of nucleosome chains into higher-order structures. In Anas platyrhynchos (Mallard), this protein is Histone H1.